The chain runs to 430 residues: Histidine--tRNA ligase (430 aa).

This sequence belongs to the class-II aminoacyl-tRNA synthetase family. In terms of assembly, homodimer.

Its subcellular location is the cytoplasm. The enzyme catalyses tRNA(His) + L-histidine + ATP = L-histidyl-tRNA(His) + AMP + diphosphate + H(+). This is Histidine--tRNA ligase from Anaplasma marginale (strain Florida).